A 754-amino-acid polypeptide reads, in one-letter code: tRNA(Met) cytidine acetyltransferase TmcA (754 aa).

Positions 181 to 202 (GISFDAAPPRVPTEKDRRSPRR) are disordered. The segment covering 192–202 (PTEKDRRSPRR) has biased composition (basic and acidic residues). ATP-binding positions include Gln-212, 236–245 (GRGKSSAAGL), and Arg-383. Positions 418 to 603 (VSYRALSPDD…YSALMTRPLS (186 aa)) constitute an N-acetyltransferase domain. Residues 529-531 (IAT), 536-542 (RSSGLGS), and Glu-568 contribute to the acetyl-CoA site.

Belongs to the RNA cytidine acetyltransferase family. TmcA subfamily.

It is found in the cytoplasm. It carries out the reaction cytidine(34) in elongator tRNA(Met) + acetyl-CoA + ATP + H2O = N(4)-acetylcytidine(34) in elongator tRNA(Met) + ADP + phosphate + CoA + H(+). In terms of biological role, catalyzes the formation of N(4)-acetylcytidine (ac(4)C) at the wobble position of tRNA(Met), by using acetyl-CoA as an acetyl donor and ATP (or GTP). The polypeptide is tRNA(Met) cytidine acetyltransferase TmcA (Haloferax volcanii (strain ATCC 29605 / DSM 3757 / JCM 8879 / NBRC 14742 / NCIMB 2012 / VKM B-1768 / DS2) (Halobacterium volcanii)).